The following is a 131-amino-acid chain: Small ribosomal subunit protein uS11 (131 aa).

The protein belongs to the universal ribosomal protein uS11 family. In terms of assembly, part of the 30S ribosomal subunit. Interacts with proteins S7 and S18. Binds to IF-3.

Located on the platform of the 30S subunit, it bridges several disparate RNA helices of the 16S rRNA. Forms part of the Shine-Dalgarno cleft in the 70S ribosome. In Paramagnetospirillum magneticum (strain ATCC 700264 / AMB-1) (Magnetospirillum magneticum), this protein is Small ribosomal subunit protein uS11.